The sequence spans 262 residues: MEHLERCAWVLRGTLVRAAVRRYLPWALAASMLAGSLLKELSPLPESYLSNKRNVLNVYFVKVAWAWTFCLLLPFIALTNYHLTGKAGLVLRRLSTLLVGTAIWYVCTAIFSNVEHYTGSCYQSPALEGVRNEPLSKQQCHGQGGFWHGFDISGHSFLLTFCALMIVEEMAVLHEVKTDRSHCLHVAITALVVALGFLTFIWVWMFLCTAVYFHNLSQKVFGTLFGLLGWYGTYGFWYLKSFSPGLPPQSCSSNLKQDSYKR.

The Cytoplasmic portion of the chain corresponds to 1–23 (MEHLERCAWVLRGTLVRAAVRRY). The chain crosses the membrane as a helical span at residues 24–44 (LPWALAASMLAGSLLKELSPL). At 45–57 (PESYLSNKRNVLN) the chain is on the lumenal side. Residues 58–78 (VYFVKVAWAWTFCLLLPFIAL) form a helical membrane-spanning segment. Residues 79–93 (TNYHLTGKAGLVLRR) lie on the Cytoplasmic side of the membrane. A helical membrane pass occupies residues 94-114 (LSTLLVGTAIWYVCTAIFSNV). The Lumenal segment spans residues 115 to 145 (EHYTGSCYQSPALEGVRNEPLSKQQCHGQGG). A helical transmembrane segment spans residues 146–166 (FWHGFDISGHSFLLTFCALMI). Histidine 155 is a catalytic residue. Topologically, residues 167 to 185 (VEEMAVLHEVKTDRSHCLH) are cytoplasmic. A helical transmembrane segment spans residues 186–206 (VAITALVVALGFLTFIWVWMF). Topologically, residues 207–218 (LCTAVYFHNLSQ) are lumenal. Residue histidine 214 is part of the active site. Residues 219–239 (KVFGTLFGLLGWYGTYGFWYL) form a helical membrane-spanning segment. Residues 240–262 (KSFSPGLPPQSCSSNLKQDSYKR) are Cytoplasmic-facing.

This sequence belongs to the FIT family. FIT2 subfamily.

It is found in the endoplasmic reticulum membrane. It carries out the reaction an acyl-CoA + H2O = an acyl-4'-phosphopantetheine + adenosine 3',5'-bisphosphate + 2 H(+). The enzyme catalyses (9Z)-octadecenoyl-CoA + H2O = S-(9Z-octadecenoyl)-4'-phosphopantetheine + adenosine 3',5'-bisphosphate + 2 H(+). It catalyses the reaction (5Z,8Z,11Z,14Z)-eicosatetraenoyl-CoA + H2O = S-(5Z,8Z,11Z,14Z-eicosatetraenoyl)-4'-phosphopantetheine + adenosine 3',5'-bisphosphate + 2 H(+). The catalysed reaction is hexadecanoyl-CoA + H2O = S-hexadecanoyl-4'-phosphopantetheine + adenosine 3',5'-bisphosphate + 2 H(+). In terms of biological role, fatty acyl-coenzyme A (CoA) diphosphatase that hydrolyzes fatty acyl-CoA to yield acyl-4'-phosphopantetheine and adenosine 3',5'-bisphosphate. Preferentially hydrolyzes unsaturated long-chain acyl-CoA substrates such as oleoyl-CoA/(9Z)-octadecenoyl-CoA and arachidonoyl-CoA/(5Z,8Z,11Z,14Z)-eicosatetraenoyl-CoA in the endoplasmic reticulum (ER) lumen. This catalytic activity is required for maintaining ER structure and for lipid droplets (LDs) biogenesis, which are lipid storage organelles involved in maintaining lipid and energy homeostasis. Directly binds to diacylglycerol (DAGs) and triacylglycerol, which is also important for LD biogenesis. May support directional budding of nacent LDs from the ER into the cytosol by reducing DAG levels at sites of LD formation. Plays a role in the regulation of cell morphology and cytoskeletal organization. This chain is Acyl-coenzyme A diphosphatase FITM2, found in Sus scrofa (Pig).